Here is a 211-residue protein sequence, read N- to C-terminus: MISYYFQGFALGAAMILPLGPQNAFVMNQGIRRQYHLMIALLCALSDLVLISAGIFGGSALLMQSPWLLALVTWGGVAFLLWYGFGALKTAMSSNLELASAEVMKQGRWKIIATMLAVTWLNPHVYLDTFVVLGSLGGQLAMEPKRWFALGTISASFLWFFGLALLAAWLAPRLRTVKAQRIINILVGVVMWLIAFQLAREGVAHMHALFN.

Helical transmembrane passes span methionine 1 to proline 21, leucine 37 to glycine 57, leucine 68 to leucine 88, isoleucine 111 to valine 131, tryptophan 147 to alanine 167, and alanine 179 to alanine 199.

This sequence belongs to the LysE/ArgO transporter (TC 2.A.75) family.

The protein resides in the cell inner membrane. The enzyme catalyses L-arginine(in) = L-arginine(out). Functionally, involved in the export of arginine. Important to control the intracellular level of arginine and the correct balance between arginine and lysine. In Salmonella paratyphi C (strain RKS4594), this protein is Arginine exporter protein ArgO.